Consider the following 146-residue polypeptide: UPF0742 protein C1348.03 (146 aa).

The helical transmembrane segment at 38 to 60 (LTVKYCLAVKLLIYLLYCWYIYS) threads the bilayer.

The protein belongs to the UPF0742 family.

It localises to the cytoplasm. The protein resides in the nucleus membrane. This Schizosaccharomyces pombe (strain 972 / ATCC 24843) (Fission yeast) protein is UPF0742 protein C1348.03.